Consider the following 239-residue polypeptide: tRNA (guanine-N(7)-)-methyltransferase (239 aa).

Glu-69, Glu-94, Asp-121, and Asp-144 together coordinate S-adenosyl-L-methionine. Asp-144 is a catalytic residue. Lys-148 is a binding site for substrate. Residues 150-155 (RHNKRR) are interaction with RNA. Substrate contacts are provided by residues Asp-180 and 217–220 (TKFE).

This sequence belongs to the class I-like SAM-binding methyltransferase superfamily. TrmB family. In terms of assembly, monomer.

It catalyses the reaction guanosine(46) in tRNA + S-adenosyl-L-methionine = N(7)-methylguanosine(46) in tRNA + S-adenosyl-L-homocysteine. It functions in the pathway tRNA modification; N(7)-methylguanine-tRNA biosynthesis. Its function is as follows. Catalyzes the formation of N(7)-methylguanine at position 46 (m7G46) in tRNA. In Klebsiella pneumoniae subsp. pneumoniae (strain ATCC 700721 / MGH 78578), this protein is tRNA (guanine-N(7)-)-methyltransferase.